Reading from the N-terminus, the 315-residue chain is Methionyl-tRNA formyltransferase (315 aa).

Position 113 to 116 (S113 to P116) interacts with (6S)-5,6,7,8-tetrahydrofolate.

It belongs to the Fmt family.

The enzyme catalyses L-methionyl-tRNA(fMet) + (6R)-10-formyltetrahydrofolate = N-formyl-L-methionyl-tRNA(fMet) + (6S)-5,6,7,8-tetrahydrofolate + H(+). Its function is as follows. Attaches a formyl group to the free amino group of methionyl-tRNA(fMet). The formyl group appears to play a dual role in the initiator identity of N-formylmethionyl-tRNA by promoting its recognition by IF2 and preventing the misappropriation of this tRNA by the elongation apparatus. This is Methionyl-tRNA formyltransferase from Shigella dysenteriae serotype 1 (strain Sd197).